A 354-amino-acid chain; its full sequence is Uroporphyrinogen decarboxylase (354 aa).

Substrate is bound by residues Arg27–Arg31, Asp77, Tyr154, Ser209, and His327.

Belongs to the uroporphyrinogen decarboxylase family. In terms of assembly, homodimer.

It is found in the cytoplasm. It carries out the reaction uroporphyrinogen III + 4 H(+) = coproporphyrinogen III + 4 CO2. It functions in the pathway porphyrin-containing compound metabolism; protoporphyrin-IX biosynthesis; coproporphyrinogen-III from 5-aminolevulinate: step 4/4. Its function is as follows. Catalyzes the decarboxylation of four acetate groups of uroporphyrinogen-III to yield coproporphyrinogen-III. In Shewanella loihica (strain ATCC BAA-1088 / PV-4), this protein is Uroporphyrinogen decarboxylase.